Consider the following 203-residue polypeptide: Bone marrow stromal antigen 2 (203 aa).

Over 1 to 26 (MAPTFYHYHPLPMDQKEPGCGIRWRC) the chain is Cytoplasmic. A helical; Signal-anchor for type II membrane protein membrane pass occupies residues 27 to 47 (LAAASVLILVALVIPLIIFAV). Residues 48–183 (KANSEACRDG…EASITSKQNS (136 aa)) lie on the Extracellular side of the membrane. 2 N-linked (GlcNAc...) asparagine glycosylation sites follow: N66 and N93. Positions 66–178 (NTTRLLQRQL…LRTAEEASIT (113 aa)) form a coiled coil. The GPI-anchor amidated serine moiety is linked to residue S183. Positions 184 to 203 (AGSMAVSSLLVLAVPLFLLF) are cleaved as a propeptide — removed in mature form.

As to quaternary structure, parallel homodimer; disulfide-linked. May form homotetramers under reducing conditions. Isoform 1 and isoform 2 form homodimers and also heterodimers with each other. Dimerization is essential for its antiviral activity. Interacts (via cytoplasmic domain) with ARHGAP44. Interacts with MMP14 (via C-terminal cytoplasmic tail). Interacts with LILRA4/ILT7. Interacts with RNF115. The GPI anchor is essential for its antiviral activity.

Its subcellular location is the golgi apparatus. It localises to the trans-Golgi network. The protein resides in the cell membrane. It is found in the late endosome. The protein localises to the membrane raft. Its subcellular location is the cytoplasm. It localises to the apical cell membrane. Its function is as follows. IFN-induced antiviral host restriction factor which efficiently blocks the release of diverse mammalian enveloped viruses by directly tethering nascent virions to the membranes of infected cells. Acts as a direct physical tether, holding virions to the cell membrane and linking virions to each other. The tethered virions can be internalized by endocytosis and subsequently degraded or they can remain on the cell surface. In either case, their spread as cell-free virions is restricted. Its target viruses belong to diverse families, including retroviridae: human immunodeficiency virus type 1 (HIV-1), mouse mammary tumor virus (MMTV) and murine leukemia virus (MLV), filoviridae: ebola virus (EBOV), arenaviridae: lassa virus (LASV), and rhabdoviridae: vesicular stomatitis virus (VSV). Can inhibit cell surface proteolytic activity of MMP14 causing decreased activation of MMP15 which results in inhibition of cell growth and migration. Can stimulate signaling by LILRA4/ILT7 and consequently provide negative feedback to the production of IFN by plasmacytoid dendritic cells in response to viral infection. Plays a role in the organization of the subapical actin cytoskeleton in polarized epithelial cells. This Cricetulus griseus (Chinese hamster) protein is Bone marrow stromal antigen 2 (Bst2).